Here is a 158-residue protein sequence, read N- to C-terminus: MRIGHGFDVHKFGGEGPLIIGGVRIPYPQGLLAHSDGDVALHTATDALLGAAALGDIGKLFPDTDSAFKGADSRALLREAWRRIAAKGYRLGNLDITLIAQVPKMALHIPQMRVNIAEDLGCHMDDVNVKATTTEQLGFTGRGEGIACEAVALLVRTS.

A divalent metal cation contacts are provided by Asp-8 and His-10. 4-CDP-2-C-methyl-D-erythritol 2-phosphate is bound by residues 8–10 (DVH) and 34–35 (HS). A divalent metal cation is bound at residue His-42. 4-CDP-2-C-methyl-D-erythritol 2-phosphate-binding positions include 56–58 (DIG), 61–65 (FPDTD), 100–106 (AQVPKMA), 132–135 (TTTE), Phe-139, and Arg-142.

It belongs to the IspF family. Homotrimer. Requires a divalent metal cation as cofactor.

It catalyses the reaction 4-CDP-2-C-methyl-D-erythritol 2-phosphate = 2-C-methyl-D-erythritol 2,4-cyclic diphosphate + CMP. The protein operates within isoprenoid biosynthesis; isopentenyl diphosphate biosynthesis via DXP pathway; isopentenyl diphosphate from 1-deoxy-D-xylulose 5-phosphate: step 4/6. In terms of biological role, involved in the biosynthesis of isopentenyl diphosphate (IPP) and dimethylallyl diphosphate (DMAPP), two major building blocks of isoprenoid compounds. Catalyzes the conversion of 4-diphosphocytidyl-2-C-methyl-D-erythritol 2-phosphate (CDP-ME2P) to 2-C-methyl-D-erythritol 2,4-cyclodiphosphate (ME-CPP) with a corresponding release of cytidine 5-monophosphate (CMP). This Sodalis glossinidius (strain morsitans) protein is 2-C-methyl-D-erythritol 2,4-cyclodiphosphate synthase.